Here is a 203-residue protein sequence, read N- to C-terminus: Nascent polypeptide-associated complex subunit alpha-like protein 1 (203 aa).

Over residues 1-23 the composition is skewed to basic and acidic residues; that stretch reads MTTEEKEILAAKLEEQKIDLDKP. The segment at 1–71 is disordered; it reads MTTEEKEILA…SEKKSRKAML (71 aa). The span at 24–50 shows a compositional bias: acidic residues; it reads EVEDDDDNEDDDSDDDDKDDDEADGLD. Ser-36 bears the Phosphoserine mark. Positions 60-125 constitute an NAC-A/B domain; the sequence is SRSEKKSRKA…AKIEDLSSQI (66 aa). Residues 158 to 203 form the UBA domain; that stretch reads EVDEEGVEPKDIELVMTQAGVSRPNAVKALKAADGDIVSAIMELTT.

This sequence belongs to the NAC-alpha family.

In terms of biological role, may promote appropriate targeting of ribosome-nascent polypeptide complexes. The sequence is that of Nascent polypeptide-associated complex subunit alpha-like protein 1 from Arabidopsis thaliana (Mouse-ear cress).